The following is a 249-amino-acid chain: Triosephosphate isomerase (249 aa).

8 to 10 (NWK) is a binding site for substrate. Residue His-95 is the Electrophile of the active site. Glu-166 acts as the Proton acceptor in catalysis. Residues Gly-172, Ser-211, and 232-233 (GG) each bind substrate.

This sequence belongs to the triosephosphate isomerase family. As to quaternary structure, homodimer.

Its subcellular location is the cytoplasm. It carries out the reaction D-glyceraldehyde 3-phosphate = dihydroxyacetone phosphate. The protein operates within carbohydrate biosynthesis; gluconeogenesis. Its pathway is carbohydrate degradation; glycolysis; D-glyceraldehyde 3-phosphate from glycerone phosphate: step 1/1. Its function is as follows. Involved in the gluconeogenesis. Catalyzes stereospecifically the conversion of dihydroxyacetone phosphate (DHAP) to D-glyceraldehyde-3-phosphate (G3P). The chain is Triosephosphate isomerase from Granulibacter bethesdensis (strain ATCC BAA-1260 / CGDNIH1).